We begin with the raw amino-acid sequence, 291 residues long: Protease HtpX homolog (291 aa).

The next 2 helical transmembrane spans lie at 4-24 (VFLFLITNLAVILVLSFSARL) and 38-58 (MGMLLAFAALIGFGGSFISLL). His-144 contacts Zn(2+). Glu-145 is a catalytic residue. Residue His-148 coordinates Zn(2+). The next 2 membrane-spanning stretches (helical) occupy residues 159 to 179 (LIQGVVNTFVIFLARVFAYAL) and 199 to 219 (ISSIAFEIVFGILASIVVMYF). A Zn(2+)-binding site is contributed by Glu-224.

It belongs to the peptidase M48B family. It depends on Zn(2+) as a cofactor.

The protein localises to the cell inner membrane. The sequence is that of Protease HtpX homolog from Chlorobium phaeovibrioides (strain DSM 265 / 1930) (Prosthecochloris vibrioformis (strain DSM 265)).